The following is a 483-amino-acid chain: Regulatory protein ViaA (483 aa).

It belongs to the ViaA family. In terms of assembly, homodimer. Interacts with RavA.

The protein resides in the cytoplasm. Functionally, component of the RavA-ViaA chaperone complex, which may act on the membrane to optimize the function of some of the respiratory chains. ViaA stimulates the ATPase activity of RavA. In Cronobacter sakazakii (strain ATCC BAA-894) (Enterobacter sakazakii), this protein is Regulatory protein ViaA.